The sequence spans 349 residues: Probable FBD-associated F-box protein At5g38565 (349 aa).

The 47-residue stretch at 1–47 folds into the F-box domain; sequence MDIFNGLPDDVLVKILSFVPTKVAVSTSILSKRWEFLWMWLPRLDFG. Residues 263–311 enclose the FBD domain; the sequence is CWNQPISVPECLLESLQIFNLSHYFGKQQDLDFVVYILKNACHLKTATI.

This Arabidopsis thaliana (Mouse-ear cress) protein is Probable FBD-associated F-box protein At5g38565.